Here is a 512-residue protein sequence, read N- to C-terminus: NAD(P)H-quinone oxidoreductase chain 4, chloroplastic (512 aa).

Helical transmembrane passes span 4 to 24 (VPWL…IPLL), 34 to 54 (WYAL…FGCY), 87 to 107 (IGLI…AWPV), 111 to 131 (PKLF…LFAS), 134 to 154 (ILLF…LLSM), 167 to 187 (FILY…TASL), 208 to 228 (GLEI…LPAF), 242 to 262 (HYST…YGFI), 274 to 294 (TVFA…AALV), 308 to 328 (SSVS…DLGL), 330 to 350 (GAML…FLAG), 374 to 396 (MFAM…GFVS), 417 to 437 (IITL…LSMV), and 462 to 482 (VFVL…PNFA).

It belongs to the complex I subunit 4 family.

The protein resides in the plastid. The protein localises to the chloroplast thylakoid membrane. The enzyme catalyses a plastoquinone + NADH + (n+1) H(+)(in) = a plastoquinol + NAD(+) + n H(+)(out). It carries out the reaction a plastoquinone + NADPH + (n+1) H(+)(in) = a plastoquinol + NADP(+) + n H(+)(out). The polypeptide is NAD(P)H-quinone oxidoreductase chain 4, chloroplastic (Zygnema circumcarinatum (Green alga)).